We begin with the raw amino-acid sequence, 830 residues long: Septin and tuftelin-interacting protein 1 homolog (830 aa).

The span at 1 to 17 (MEDDDGRESFEINDMDL) shows a compositional bias: acidic residues. 2 disordered regions span residues 1 to 122 (MEDD…PKQN) and 196 to 244 (AYGK…KGSW). The 47-residue stretch at 153 to 199 (NSNKIMKMMQAMGYKPGEGLGAQGQGIVEPVQAQLRKGRGAVGAYGK) folds into the G-patch domain.

It belongs to the TFP11/STIP family. As to quaternary structure, identified in the spliceosome C complex. Can assemble into large rod-like polymers. Detected in muscle cells from body, pharynx and vulva, in neurons from head and tail, in pharyngeal gland and in tail hypodermal cells.

Its subcellular location is the nucleus. Its function is as follows. May be involved in pre-mRNA splicing. Required for embryonic development and survival. The protein is Septin and tuftelin-interacting protein 1 homolog (stip-1) of Caenorhabditis elegans.